Here is a 249-residue protein sequence, read N- to C-terminus: tRNA uridine(34) hydroxylase (249 aa).

A Rhodanese domain is found at 124-218; it reads TKQDVIVIDT…YLEDTQNKNN (95 aa). The Cysteine persulfide intermediate role is filled by cysteine 178.

This sequence belongs to the TrhO family.

It catalyses the reaction uridine(34) in tRNA + AH2 + O2 = 5-hydroxyuridine(34) in tRNA + A + H2O. Functionally, catalyzes oxygen-dependent 5-hydroxyuridine (ho5U) modification at position 34 in tRNAs. In Rickettsia canadensis (strain McKiel), this protein is tRNA uridine(34) hydroxylase.